The following is a 110-amino-acid chain: Inner membrane protein YgiZ (110 aa).

Residues 1–8 (MLKQKIKT) are Cytoplasmic-facing. Residues 9 to 29 (IFEALLYIMLTYWLIDSFFAF) form a helical membrane-spanning segment. Residues 30–53 (NKYDWMLESGGNICSIPSVSGEDR) are Periplasmic-facing. The chain crosses the membrane as a helical span at residues 54 to 74 (ILQAMIAAFFLLTPLIILILR). Residues 75–83 (KLFMREMFE) lie on the Cytoplasmic side of the membrane. Residues 84–104 (FWVYVFSLGICLVCGWWLFWG) form a helical membrane-spanning segment. At 105 to 110 (RFIFCY) the chain is on the periplasmic side.

It localises to the cell inner membrane. The sequence is that of Inner membrane protein YgiZ (ygiZ) from Escherichia coli (strain K12).